We begin with the raw amino-acid sequence, 170 residues long: Lipoprotein signal peptidase (170 aa).

4 helical membrane passes run 11–31 (LGWLWLSVLVLVIDQVSKLHF), 41–61 (IVVIPDYFSWTLAYNTGAAFS), 69–89 (WQRWLFALIAIAVSAVLVVWL), and 95–115 (NETWLAIALALVLGGALGNLY). Catalysis depends on residues D125 and D144. Residues 136–156 (YFPAFNFADSAITVGAVMLAL) traverse the membrane as a helical segment.

This sequence belongs to the peptidase A8 family.

It is found in the cell inner membrane. The enzyme catalyses Release of signal peptides from bacterial membrane prolipoproteins. Hydrolyzes -Xaa-Yaa-Zaa-|-(S,diacylglyceryl)Cys-, in which Xaa is hydrophobic (preferably Leu), and Yaa (Ala or Ser) and Zaa (Gly or Ala) have small, neutral side chains.. It participates in protein modification; lipoprotein biosynthesis (signal peptide cleavage). In terms of biological role, this protein specifically catalyzes the removal of signal peptides from prolipoproteins. This chain is Lipoprotein signal peptidase, found in Pseudomonas fluorescens (strain ATCC BAA-477 / NRRL B-23932 / Pf-5).